Reading from the N-terminus, the 278-residue chain is Large ribosomal subunit protein uL2 (278 aa).

2 disordered regions span residues 29-53 and 221-278; these read PVKS…TSRG and RGVA…KKKR. Over residues 269 to 278 the composition is skewed to basic residues; the sequence is IRSRHAKKKR.

Belongs to the universal ribosomal protein uL2 family. In terms of assembly, part of the 50S ribosomal subunit. Forms a bridge to the 30S subunit in the 70S ribosome.

Functionally, one of the primary rRNA binding proteins. Required for association of the 30S and 50S subunits to form the 70S ribosome, for tRNA binding and peptide bond formation. It has been suggested to have peptidyltransferase activity; this is somewhat controversial. Makes several contacts with the 16S rRNA in the 70S ribosome. The chain is Large ribosomal subunit protein uL2 from Erythrobacter litoralis (strain HTCC2594).